The sequence spans 315 residues: GTP cyclohydrolase MptA (315 aa).

This sequence belongs to the GTP cyclohydrolase IV family. In terms of assembly, homodimer. Requires Fe(2+) as cofactor.

The catalysed reaction is GTP + H2O = 7,8-dihydroneopterin 2',3'-cyclic phosphate + formate + diphosphate + H(+). It participates in cofactor biosynthesis; 5,6,7,8-tetrahydromethanopterin biosynthesis. Its function is as follows. Converts GTP to 7,8-dihydro-D-neopterin 2',3'-cyclic phosphate, the first intermediate in the biosynthesis of coenzyme methanopterin. The polypeptide is GTP cyclohydrolase MptA (Methanococcus maripaludis (strain C5 / ATCC BAA-1333)).